We begin with the raw amino-acid sequence, 391 residues long: Elongation factor Tu (391 aa).

In terms of domain architecture, tr-type G spans 10 to 201 (KPHVNIGTIG…AVDEYIPTPA (192 aa)). The G1 stretch occupies residues 19–26 (GHVDHGKT). 19–26 (GHVDHGKT) serves as a coordination point for GTP. Position 26 (Thr-26) interacts with Mg(2+). The tract at residues 55–59 (GITIS) is G2. Positions 76–79 (DCPG) are G3. GTP is bound by residues 76–80 (DCPGH) and 131–134 (NKVD). Residues 131–134 (NKVD) form a G4 region. The G5 stretch occupies residues 169-171 (SAL).

Belongs to the TRAFAC class translation factor GTPase superfamily. Classic translation factor GTPase family. EF-Tu/EF-1A subfamily. Monomer.

The protein resides in the cytoplasm. It carries out the reaction GTP + H2O = GDP + phosphate + H(+). Functionally, GTP hydrolase that promotes the GTP-dependent binding of aminoacyl-tRNA to the A-site of ribosomes during protein biosynthesis. In Cereibacter sphaeroides (strain ATCC 17025 / ATH 2.4.3) (Rhodobacter sphaeroides), this protein is Elongation factor Tu.